A 130-amino-acid polypeptide reads, in one-letter code: Cytochrome c-type biogenesis protein CcmE (130 aa).

Over 1–7 (MKKKHKR) the chain is Cytoplasmic. Residues 8–28 (LLITSGIFCFLSCAVFFILTT) traverse the membrane as a helical; Signal-anchor for type II membrane protein segment. Residues 29-130 (LKENISFFYT…DENYKPKVLK (102 aa)) are Extracellular-facing. Positions 120 and 124 each coordinate heme.

It belongs to the CcmE/CycJ family.

The protein localises to the cell membrane. Heme chaperone required for the biogenesis of c-type cytochromes. Transiently binds heme delivered by CcmC and transfers the heme to apo-cytochromes in a process facilitated by CcmF and CcmH. This is Cytochrome c-type biogenesis protein CcmE from Wolbachia pipientis subsp. Culex pipiens (strain wPip).